The chain runs to 247 residues: NH(3)-dependent NAD(+) synthetase (247 aa).

Gly29–Ser36 contacts ATP. Position 35 (Asp35) interacts with Mg(2+). Deamido-NAD(+) is bound at residue Arg120. Position 140 (Thr140) interacts with ATP. Glu145 serves as a coordination point for Mg(2+). Residues Lys153 and Asp160 each coordinate deamido-NAD(+). Positions 169 and 191 each coordinate ATP. His237–Lys238 contacts deamido-NAD(+).

It belongs to the NAD synthetase family. Homodimer.

It catalyses the reaction deamido-NAD(+) + NH4(+) + ATP = AMP + diphosphate + NAD(+) + H(+). Its pathway is cofactor biosynthesis; NAD(+) biosynthesis; NAD(+) from deamido-NAD(+) (ammonia route): step 1/1. Functionally, catalyzes the ATP-dependent amidation of deamido-NAD to form NAD. Uses ammonia as a nitrogen source. In Alkaliphilus metalliredigens (strain QYMF), this protein is NH(3)-dependent NAD(+) synthetase.